The following is a 1997-amino-acid chain: Protein MOR1 (1997 aa).

HEAT repeat units follow at residues 48 to 86 (DARLREFGPLFKKTVADSNAPVQEKALDALLAFQRAADA) and 164 to 202 (VVPPKKILKMLPELFDHPDQNVRASSKGLTLELCRWIGK). The disordered stretch occupies residues 236 to 264 (RKIRSEQEKELEEEVVPEAAGTNNSEEAV). 3 HEAT repeats span residues 321 to 359 (PGDFHEICRTLKKLITDVNLAVSVEATQAIGNLAKGLRT), 362 to 400 (SGNSRVLLPVLLEKLKEKKPTMTEALSQTLQAMHKSGCI), and 441 to 479 (LKLHKEYVPICMECLNDGTPEVRDASFSVLTAIAKMVGM). The tract at residues 501–576 (IGSASDTTSG…DGGPQSKASA (76 aa)) is disordered. Polar residues predominate over residues 504-520 (ASDTTSGTVAASNTGVG). The span at 529-539 (SSSMRRSAASM) shows a compositional bias: low complexity. HEAT repeat units lie at residues 848–886 (EDISAKITPTLLKNLGSPDWKLRLESIDAVSKIVEEAHK), 890–928 (PTGTVELFTALRARLYDSNKNLVMATLSTIGGLASAMGP), 931–969 (EKSSKGILADVLKCLGDNKKHMRECTLTALDLWVAAAQL), and 1007–1045 (PSEALPLLKPSASSLMDKSSEVRKAAESFMNEILKICGQ). Positions 1087–1115 (MSLPSKAGSKNNKHGPNDRGSNVSKAVSQ) are disordered. 4 HEAT repeats span residues 1233–1259 (TTCLLKVLDFLPELFDVLKDQSYMLTE), 1260–1294 (AEAAIFLPCLMEKSGHNIEKVREKMGELIKQMVNI), 1295–1332 (YSLPKLLPYILEGLRSKNNRTRIECVDIIGYFMDHHGT), and 1334–1372 (VSGLLKNLPSVAALTAERDGEIRKAALNTLATAYKNLGD). Over residues 1400-1410 (MDKRREGRPGD) the composition is skewed to basic and acidic residues. Residues 1400 to 1436 (MDKRREGRPGDARAALRRSVRENGSDIAEQSGEAVSR) form a disordered region. One copy of the HEAT 14 repeat lies at 1539-1579 (RSCKYVLNTLMQTFQIKRLAHAVKEGTLDNLITELLLWLLD). The interval 1755 to 1776 (MGQTHWGDAGSNNPNPSTHSTD) is disordered. Residues 1764 to 1776 (GSNNPNPSTHSTD) show a composition bias toward polar residues.

This sequence belongs to the TOG/XMAP215 family.

Its subcellular location is the cytoplasm. It localises to the cytoskeleton. Functionally, microtubule-associated protein that is essential for cortical microtubules organization and function. The polypeptide is Protein MOR1 (MOR1) (Oryza sativa subsp. japonica (Rice)).